Here is a 185-residue protein sequence, read N- to C-terminus: Ribosome maturation factor RimM (185 aa).

One can recognise a PRC barrel domain in the interval 96 to 171; that stretch reads EDEFYHSDLL…VITIDPPEDV (76 aa). Residues 165–185 are disordered; that stretch reads IDPPEDVGSKAEEEGGGAPDD.

This sequence belongs to the RimM family. In terms of assembly, binds ribosomal protein uS19.

The protein resides in the cytoplasm. Its function is as follows. An accessory protein needed during the final step in the assembly of 30S ribosomal subunit, possibly for assembly of the head region. Essential for efficient processing of 16S rRNA. May be needed both before and after RbfA during the maturation of 16S rRNA. It has affinity for free ribosomal 30S subunits but not for 70S ribosomes. This Maricaulis maris (strain MCS10) (Caulobacter maris) protein is Ribosome maturation factor RimM.